Here is a 173-residue protein sequence, read N- to C-terminus: Alpha-crystallin A chain (173 aa).

Met1 carries the post-translational modification N-acetylmethionine. The segment at 1–63 (MDVTIQHPWF…RTVLDSGVSE (63 aa)) is required for complex formation with BFSP1 and BFSP2. At Gln6 the chain carries Deamidated glutamine; partial. Ser45 is subject to Phosphoserine. Gln50 is modified (deamidated glutamine; partial). A sHSP domain is found at 52-162 (LFRTVLDSGV…GHSERAIPVS (111 aa)). Residue Lys70 is modified to N6-acetyllysine. Gln90 is modified (deamidated glutamine; partial). Lys99 carries the N6-acetyllysine modification. Residue His100 participates in Zn(2+) binding. Asn101 carries the deamidated asparagine; partial modification. Positions 102 and 107 each coordinate Zn(2+). Ser122 carries the phosphoserine modification. Deamidated asparagine; partial is present on Asn123. The interval 144–173 (PKVQSGLDAGHSERAIPVSREEKPSSAPSS) is disordered. Gln147 is modified (deamidated glutamine; partial). Residues 153 to 167 (GHSERAIPVSREEKP) show a composition bias toward basic and acidic residues. His154 is a binding site for Zn(2+). O-linked (GlcNAc) serine glycosylation is present at Ser162.

Belongs to the small heat shock protein (HSP20) family. Heteromer composed of three CRYAA and one CRYAB subunits. Inter-subunit bridging via zinc ions enhances stability, which is crucial as there is no protein turn over in the lens. Can also form homodimers and homotetramers (dimers of dimers) which serve as the building blocks of homooligomers. Within homooligomers, the zinc-binding motif is created from residues of 3 different molecules. His-100 and Glu-102 from one molecule are ligands of the zinc ion, and His-107 and His-154 residues from additional molecules complete the site with tetrahedral coordination geometry. Part of a complex required for lens intermediate filament formation composed of BFSP1, BFSP2 and CRYAA. Acetylation at Lys-70 may increase chaperone activity. In terms of processing, undergoes age-dependent proteolytical cleavage at the C-terminus.

It is found in the cytoplasm. Its subcellular location is the nucleus. Functionally, contributes to the transparency and refractive index of the lens. Acts as a chaperone, preventing aggregation of various proteins under a wide range of stress conditions. Required for the correct formation of lens intermediate filaments as part of a complex composed of BFSP1, BFSP2 and CRYAA. The chain is Alpha-crystallin A chain (CRYAA) from Otolemur crassicaudatus (Brown greater galago).